Reading from the N-terminus, the 158-residue chain is 2-C-methyl-D-erythritol 2,4-cyclodiphosphate synthase (158 aa).

Asp9 and His11 together coordinate a divalent metal cation. 4-CDP-2-C-methyl-D-erythritol 2-phosphate contacts are provided by residues 9 to 11 (DVH) and 35 to 36 (HS). His43 serves as a coordination point for a divalent metal cation. 4-CDP-2-C-methyl-D-erythritol 2-phosphate-binding positions include 57 to 59 (DIG), 62 to 66 (FPDTD), 101 to 107 (AQKPKMA), 133 to 136 (TTTE), Phe140, and Arg143.

This sequence belongs to the IspF family. In terms of assembly, homotrimer. The cofactor is a divalent metal cation.

It catalyses the reaction 4-CDP-2-C-methyl-D-erythritol 2-phosphate = 2-C-methyl-D-erythritol 2,4-cyclic diphosphate + CMP. It participates in isoprenoid biosynthesis; isopentenyl diphosphate biosynthesis via DXP pathway; isopentenyl diphosphate from 1-deoxy-D-xylulose 5-phosphate: step 4/6. Involved in the biosynthesis of isopentenyl diphosphate (IPP) and dimethylallyl diphosphate (DMAPP), two major building blocks of isoprenoid compounds. Catalyzes the conversion of 4-diphosphocytidyl-2-C-methyl-D-erythritol 2-phosphate (CDP-ME2P) to 2-C-methyl-D-erythritol 2,4-cyclodiphosphate (ME-CPP) with a corresponding release of cytidine 5-monophosphate (CMP). The polypeptide is 2-C-methyl-D-erythritol 2,4-cyclodiphosphate synthase (Bacillus thuringiensis subsp. konkukian (strain 97-27)).